The following is a 189-amino-acid chain: Elongation factor P-like protein (189 aa).

It belongs to the elongation factor P family.

In Vibrio atlanticus (strain LGP32) (Vibrio splendidus (strain Mel32)), this protein is Elongation factor P-like protein.